A 377-amino-acid chain; its full sequence is MENFPTEYFLNTSVRLLEYIRYRDSNYTREERIENLHYAYNKAAHHFAQPRQQQLLKVDPKRLQASLQTIVGMVVYSWAKVSKECMADLSIHYTYTLVLDDSSDDPYAAMMNYFNDLQAGREQAHPWWALVNEHFPNVLRHFGPFCSLNLIRSTLDFFEGCWIEQYNFGGFPGSHDYPQFLRRMNGLGHCVGASLWPKEQFDERSLFLEITSAIAQMENWMVWVNDLMSFYKEFDDERDQISLVKNYVVSDEISLHEALEKLTQDTLHSSKQMVAVFSDKDPQVMVTIECFMHGYVTWHLCDHRYRLNEISEKVKEQKTEDAQKFCKFYEQAANVGAVSPSEWAYPPVAQLANVRSKDVKNVKQIEKPLLSSIELVE.

The protein belongs to the trichodiene synthase family.

The catalysed reaction is (2E,6E)-farnesyl diphosphate = trichodiene + diphosphate. It functions in the pathway sesquiterpene biosynthesis; trichothecene biosynthesis. TS is a member of the terpene cyclase group of enzymes. It catalyzes the isomerization and cyclization of farnesyl pyro-phosphate to form trichodiene, the first cyclic intermediate in the biosynthetic pathway for trichothecenes. It serves to branch trichothecene biosynthesis from the isoprenoid pathway. This is Trichodiene synthase (TRI5) from Fusarium poae.